The chain runs to 474 residues: Sulfide dehydrogenase subunit alpha (474 aa).

A propeptide spanning residues Met-1–Pro-2 is cleaved from the precursor. 4 residues coordinate [4Fe-4S] cluster: Cys-42, Cys-45, Cys-52, and Cys-56. [3Fe-4S] cluster-binding residues include Cys-101, Cys-107, and Cys-111.

As to quaternary structure, heterodimer of alpha and beta subunits. The cofactor is FAD. It depends on [3Fe-4S] cluster as a cofactor. Requires [4Fe-4S] cluster as cofactor.

It localises to the cytoplasm. The catalysed reaction is n sulfur + hydrogen sulfide + NADP(+) = (n+1) sulfur + NADPH. The enzyme catalyses 2 reduced [2Fe-2S]-[ferredoxin] + NADP(+) + H(+) = 2 oxidized [2Fe-2S]-[ferredoxin] + NADPH. Functionally, a bifunctional enzyme that catalyzes the reduction of elemental sulfur or polysulfide to hydrogen sulfide with NADPH as electron donor. Also functions as a reduced ferredoxin:NADP oxidoreductase with a very high affinity for reduced ferredoxin. Exhibits a broad specificity for various physiological and non-physiological substrates with varied reduction potentials such as methyl viologen, benzyl viologen, FAD, FMN, methylene blue, 2,6-dichlorophenolindophenol (DCIP), cytochrome C and ferricyanide with highest preference for benzyl viologen. Does not reduce fumarate, succinate, nitrate, nitrite, sulfate, sulfite or protons. Does not possess any hydrogenase activity or NADPH-dependent glutamate synthase activity. This is Sulfide dehydrogenase subunit alpha from Pyrococcus furiosus (strain ATCC 43587 / DSM 3638 / JCM 8422 / Vc1).